Here is a 478-residue protein sequence, read N- to C-terminus: Proline--tRNA ligase (478 aa).

Belongs to the class-II aminoacyl-tRNA synthetase family. ProS type 3 subfamily. In terms of assembly, homodimer.

The protein resides in the cytoplasm. It carries out the reaction tRNA(Pro) + L-proline + ATP = L-prolyl-tRNA(Pro) + AMP + diphosphate. Functionally, catalyzes the attachment of proline to tRNA(Pro) in a two-step reaction: proline is first activated by ATP to form Pro-AMP and then transferred to the acceptor end of tRNA(Pro). The polypeptide is Proline--tRNA ligase (Clostridium botulinum (strain ATCC 19397 / Type A)).